We begin with the raw amino-acid sequence, 424 residues long: Calreticulin-2 (424 aa).

Positions 1–22 (MAKMIPSLVSLILIGLVAIASA) are cleaved as a signal peptide. An N-linked (GlcNAc...) asparagine glycan is attached at asparagine 59. A disulfide bridge connects residues cysteine 108 and cysteine 140. Tyrosine 112, lysine 114, tyrosine 131, and aspartate 138 together coordinate an alpha-D-glucoside. 7 tandem repeats follow at residues 194–205 (KQTGSLYSDWDL), 213–224 (DPSAKKPEDWDE), 230–241 (DPEDKKPDGYDD), 248–259 (DTDSKKPEDWDD), 263–273 (GEWTAPTIPNP), 277–287 (GEWKPKQIKNP), and 291–301 (GKWEAPLIDNP). Residues 194-259 (KQTGSLYSDW…DSKKPEDWDD (66 aa)) are 4 X approximate repeats. A compositionally biased stretch (basic and acidic residues) spans 210 to 220 (KIKDPSAKKPE). The interval 210 to 279 (KIKDPSAKKP…IPNPEYMGEW (70 aa)) is disordered. The span at 221–230 (DWDEQEYISD) shows a compositional bias: acidic residues. Over residues 231–255 (PEDKKPDGYDDIPKEIPDTDSKKPE) the composition is skewed to basic and acidic residues. The interval 263-301 (GEWTAPTIPNPEYMGEWKPKQIKNPNYKGKWEAPLIDNP) is 3 X approximate repeats. Glutamate 321 serves as a coordination point for an alpha-D-glucoside. Residues 362 to 378 (FDEAEKKNEEEESKDAP) are compositionally biased toward basic and acidic residues. The segment at 362–424 (FDEAEKKNEE…EKDATAHDEL (63 aa)) is disordered. Residues 379-397 (AESDAEDEPEDDEGGDDSD) show a composition bias toward acidic residues. 2 positions are modified to phosphoserine: serine 381 and serine 396. Residues 398–424 (SESKAEETKSVDSEETSEKDATAHDEL) show a composition bias toward basic and acidic residues. Positions 421–424 (HDEL) match the Prevents secretion from ER motif.

It belongs to the calreticulin family.

It localises to the endoplasmic reticulum lumen. In terms of biological role, molecular calcium-binding chaperone promoting folding, oligomeric assembly and quality control in the ER via the calreticulin/calnexin cycle. This lectin may interact transiently with almost all of the monoglucosylated glycoproteins that are synthesized in the ER. This chain is Calreticulin-2 (CRT2), found in Arabidopsis thaliana (Mouse-ear cress).